The following is a 676-amino-acid chain: Pentatricopeptide repeat-containing protein ATP4 homolog, chloroplastic (676 aa).

A chloroplast-targeting transit peptide spans 1-73 (MASPSSLLSW…NSPRAAGLAR (73 aa)). Positions 17–58 (LSFQPKNPSPSPATARVSVQDPPPPPSDANPSPGRSSNTSRY) are disordered. PPR repeat units follow at residues 148–182 (EVILYNVALKALRKRRRWSDAEALWEEMLREGVQP), 183–217 (DNATFSTVISCARACGMPGKAVEWFEKMPDFGCSP), 218–252 (DMLTYSAVIDAYGRAGDAETALRLYDRARAEKWQL), 253–287 (DPVICATVIRVHSSSGNFDGALNVFEEMKAAGVKP), 288–322 (NLVVYNTVLDAMGRAMRPWVVKTIHRELVSQEAVP), 323–353 (NKATYCCLLHAYTRARYGEDAMAVYRVMKDE), 358–388 (DVVLYNMLLSMCADIGYVEEAEEIFRDMKAS), 396–430 (DSWSYSSMVTLYSCTGNVAGAEGILNEMVEAGFKP), 431–465 (NIFILTSLIRCYGKAGRTDDVVRSFAMLEDLGITP), and 532–566 (RMPYCNCLMDLAVNLSQMEKACALLDVALRLGIYS). The 85-residue stretch at 578–662 (LHLRGLSVGA…WFLTTSVAAR (85 aa)) folds into the Smr domain.

Belongs to the PPR family. P subfamily.

It is found in the plastid. Its subcellular location is the chloroplast. Its function is as follows. Involved in translation and accumulation of chloroplast ATP synthase subunits. This Oryza sativa subsp. japonica (Rice) protein is Pentatricopeptide repeat-containing protein ATP4 homolog, chloroplastic.